The following is a 124-amino-acid chain: Small ribosomal subunit protein uS12 (124 aa).

D89 is subject to 3-methylthioaspartic acid. Positions 104 to 124 (LQGVKDRKQSRSKYGAKRPKK) are disordered. A compositionally biased stretch (basic residues) spans 113–124 (SRSKYGAKRPKK).

Belongs to the universal ribosomal protein uS12 family. In terms of assembly, part of the 30S ribosomal subunit. Contacts proteins S8 and S17. May interact with IF1 in the 30S initiation complex.

In terms of biological role, with S4 and S5 plays an important role in translational accuracy. Its function is as follows. Interacts with and stabilizes bases of the 16S rRNA that are involved in tRNA selection in the A site and with the mRNA backbone. Located at the interface of the 30S and 50S subunits, it traverses the body of the 30S subunit contacting proteins on the other side and probably holding the rRNA structure together. The combined cluster of proteins S8, S12 and S17 appears to hold together the shoulder and platform of the 30S subunit. This chain is Small ribosomal subunit protein uS12, found in Thiomonas delicata (Thiomonas cuprina).